A 1104-amino-acid polypeptide reads, in one-letter code: Ankyrin repeat- and BTB/POZ domain-containing protein 3 (1104 aa).

The chain crosses the membrane as a helical span at residues 168–188 (IVLSWGLAAHCTAAALAALSL). The interval 260-301 (SCSGPGSGSGSGPGPSSGPGAAPAADKEREAPGGGAASGGAC) is disordered. Gly residues predominate over residues 264–276 (PGSGSGSGPGPSS). 5 ANK repeats span residues 603–632 (QGMT…DLNV), 649–678 (RHWT…KVEG), 687–716 (YSET…DPLI), 730–759 (GDMN…KEKS), and 825–854 (TWLE…TIQE). The region spanning 923-989 (SDVTFLVEGR…LYYGGPESLL (67 aa)) is the BTB domain.

The protein resides in the membrane. The protein is Ankyrin repeat- and BTB/POZ domain-containing protein 3 of Homo sapiens (Human).